Consider the following 282-residue polypeptide: Chorismate dehydratase (282 aa).

The protein belongs to the MqnA/MqnD family. MqnA subfamily.

It catalyses the reaction chorismate = 3-[(1-carboxyvinyl)-oxy]benzoate + H2O. Its pathway is quinol/quinone metabolism; menaquinone biosynthesis. In terms of biological role, catalyzes the dehydration of chorismate into 3-[(1-carboxyvinyl)oxy]benzoate, a step in the biosynthesis of menaquinone (MK, vitamin K2). This is Chorismate dehydratase from Streptomyces coelicolor (strain ATCC BAA-471 / A3(2) / M145).